Reading from the N-terminus, the 78-residue chain is Acyl carrier protein (78 aa).

Residues 1-76 form the Carrier domain; that stretch reads MALFEDIQAV…DVVKYIEDNK (76 aa). O-(pantetheine 4'-phosphoryl)serine is present on S36.

The protein belongs to the acyl carrier protein (ACP) family. Post-translationally, 4'-phosphopantetheine is transferred from CoA to a specific serine of apo-ACP by AcpS. This modification is essential for activity because fatty acids are bound in thioester linkage to the sulfhydryl of the prosthetic group.

The protein localises to the cytoplasm. Its pathway is lipid metabolism; fatty acid biosynthesis. In terms of biological role, carrier of the growing fatty acid chain in fatty acid biosynthesis. The chain is Acyl carrier protein from Helicobacter pylori (strain Shi470).